Reading from the N-terminus, the 401-residue chain is Elongation factor Tu (401 aa).

Residues 10–211 enclose the tr-type G domain; sequence KPHLNIGTIG…AVDTYVPNPT (202 aa). A G1 region spans residues 19-26; it reads GHVDHGKT. 19-26 is a binding site for GTP; it reads GHVDHGKT. Threonine 26 contributes to the Mg(2+) binding site. The G2 stretch occupies residues 62–66; sequence GITIA. The tract at residues 83 to 86 is G3; sequence DCPG. Residues 83–87 and 138–141 each bind GTP; these read DCPGH and NKAD. The tract at residues 138-141 is G4; sequence NKAD. A G5 region spans residues 179–181; it reads SAL.

This sequence belongs to the TRAFAC class translation factor GTPase superfamily. Classic translation factor GTPase family. EF-Tu/EF-1A subfamily. In terms of assembly, monomer.

The protein localises to the cytoplasm. It catalyses the reaction GTP + H2O = GDP + phosphate + H(+). Its function is as follows. GTP hydrolase that promotes the GTP-dependent binding of aminoacyl-tRNA to the A-site of ribosomes during protein biosynthesis. The protein is Elongation factor Tu of Leptospira biflexa serovar Patoc (strain Patoc 1 / Ames).